A 185-amino-acid chain; its full sequence is F-box protein At1g61340 (185 aa).

The 49-residue stretch at 78–126 (SRELEDLPLDILVRIICGVEHEDLKQLFHVSKTIREATMIAKQSHFAYS) folds into the F-box domain.

This is F-box protein At1g61340 from Arabidopsis thaliana (Mouse-ear cress).